The chain runs to 209 residues: MNNNGMQMPQARYVLPSFIEQSAYGTKETNPYAKLFEERIIFLGTQVDDTSANDIMAQLLVLEGLDPDRDITMYINSPGGSFTSLMAIYDTMQYVRPDVRTVCLGQAASAAAVLLAAGAPGKRACLPNSRVLIHQPATQGTQGQVSDLEIQAKEIERMRTLMEQTLARHTGRSAEQVRIDTDRDKILTAEEAVEYGIVDQVFDYRKLNG.

Ser-109 functions as the Nucleophile in the catalytic mechanism. Residue His-134 is part of the active site.

The protein belongs to the peptidase S14 family. In terms of assembly, fourteen ClpP subunits assemble into 2 heptameric rings which stack back to back to give a disk-like structure with a central cavity, resembling the structure of eukaryotic proteasomes.

The protein localises to the cytoplasm. It catalyses the reaction Hydrolysis of proteins to small peptides in the presence of ATP and magnesium. alpha-casein is the usual test substrate. In the absence of ATP, only oligopeptides shorter than five residues are hydrolyzed (such as succinyl-Leu-Tyr-|-NHMec, and Leu-Tyr-Leu-|-Tyr-Trp, in which cleavage of the -Tyr-|-Leu- and -Tyr-|-Trp bonds also occurs).. Its function is as follows. Cleaves peptides in various proteins in a process that requires ATP hydrolysis. Has a chymotrypsin-like activity. Plays a major role in the degradation of misfolded proteins. The polypeptide is ATP-dependent Clp protease proteolytic subunit 1 (Corynebacterium diphtheriae (strain ATCC 700971 / NCTC 13129 / Biotype gravis)).